Here is a 233-residue protein sequence, read N- to C-terminus: Movement and silencing protein TGBp1 (233 aa).

Residues methionine 1–lysine 133 form the (+)RNA virus helicase ATP-binding domain. The 100-residue stretch at valine 134–glutamine 233 folds into the (+)RNA virus helicase C-terminal domain.

Belongs to the Tymovirales TGBp1 protein family. As to quaternary structure, homodimer and homooligomer. Interacts with capsid protein. Interacts with host AGO1; this interaction targets the host protein for degradation, thereby suppressing the antiviral RNA silencing.

The protein resides in the host cytoplasm. Functionally, transports viral genome to neighboring plant cells directly through plasmosdesmata, without any budding. The movement protein allows efficient cell to cell propagation, by bypassing the host cell wall barrier. Increases plasmodesma size exclusion limit. Acts as a suppressor of RNA-mediated gene silencing, also known as post-transcriptional gene silencing (PTGS), a mechanism of plant viral defense that limits the accumulation of viral RNAs. This chain is Movement and silencing protein TGBp1, found in Carica papaya (Papaya).